The following is an 84-amino-acid chain: MKLTCVMIVAVLFLTAWTFVTADDSRYGLKDLFPKERHEMKNPEASKLNQREACYNAGSFCGIHPGLCCSEFCILWCITFVDSG.

Positions 1–22 (MKLTCVMIVAVLFLTAWTFVTA) are cleaved as a signal peptide. Residues 23–51 (DDSRYGLKDLFPKERHEMKNPEASKLNQR) constitute a propeptide that is removed on maturation. 3 cysteine pairs are disulfide-bonded: Cys54–Cys69, Cys61–Cys73, and Cys68–Cys77. 4-hydroxyproline is present on Pro65. Ser83 is subject to Serine amide.

This sequence belongs to the conotoxin O1 superfamily. In terms of tissue distribution, expressed by the venom duct.

It is found in the secreted. In terms of biological role, delta-conotoxins bind to site 6 of voltage-gated sodium channels (Nav) and inhibit the inactivation process. This chain is Delta-conotoxin-like MVIB, found in Conus magus (Magical cone).